The following is a 186-amino-acid chain: ATP synthase subunit delta (186 aa).

This sequence belongs to the ATPase delta chain family. F-type ATPases have 2 components, F(1) - the catalytic core - and F(0) - the membrane proton channel. F(1) has five subunits: alpha(3), beta(3), gamma(1), delta(1), epsilon(1). CF(0) has four main subunits: a(1), b(1), b'(1) and c(10-14). The alpha and beta chains form an alternating ring which encloses part of the gamma chain. F(1) is attached to F(0) by a central stalk formed by the gamma and epsilon chains, while a peripheral stalk is formed by the delta, b and b' chains.

Its subcellular location is the cell inner membrane. In terms of biological role, f(1)F(0) ATP synthase produces ATP from ADP in the presence of a proton or sodium gradient. F-type ATPases consist of two structural domains, F(1) containing the extramembraneous catalytic core and F(0) containing the membrane proton channel, linked together by a central stalk and a peripheral stalk. During catalysis, ATP synthesis in the catalytic domain of F(1) is coupled via a rotary mechanism of the central stalk subunits to proton translocation. This protein is part of the stalk that links CF(0) to CF(1). It either transmits conformational changes from CF(0) to CF(1) or is implicated in proton conduction. The polypeptide is ATP synthase subunit delta (Rhodopseudomonas palustris (strain BisB5)).